Consider the following 283-residue polypeptide: Poly(3-hydroxyalkanoate) depolymerase (283 aa).

Residues 30-253 form the AB hydrolase-1 domain; the sequence is PLLIFNGIGA…IDDGHLFLIT (224 aa). The active-site Charge relay system is the Ser102.

It belongs to the AB hydrolase superfamily. Lipase family.

Functionally, complements a mutant that does not degrade PHA; might be a lipase. The polypeptide is Poly(3-hydroxyalkanoate) depolymerase (Ectopseudomonas oleovorans (Pseudomonas oleovorans)).